The following is a 340-amino-acid chain: Probable allantoicase (340 aa).

Belongs to the allantoicase family.

The enzyme catalyses allantoate + H2O = (S)-ureidoglycolate + urea. It functions in the pathway nitrogen metabolism; (S)-allantoin degradation; (S)-ureidoglycolate from allantoate (aminidohydrolase route): step 1/1. This Rhizobium meliloti (strain 1021) (Ensifer meliloti) protein is Probable allantoicase.